We begin with the raw amino-acid sequence, 462 residues long: Mitochondrial-processing peptidase subunit beta (462 aa).

A mitochondrion-targeting transit peptide spans 1-20 (MFSRTASKFRNTRRLLSTIS). Histidine 70 lines the Zn(2+) pocket. Glutamate 73 acts as the Proton acceptor in catalysis. Zn(2+) is bound by residues histidine 74 and glutamate 150. The residue at position 243 (serine 243) is a Phosphoserine.

Belongs to the peptidase M16 family. Heterodimer of MAS2 (alpha) and MAS1 (beta) subunits, forming the mitochondrial processing protease (MPP) in which MAS2 is involved in substrate recognition and binding and MAS1 is the catalytic subunit. Zn(2+) is required as a cofactor.

Its subcellular location is the mitochondrion matrix. It carries out the reaction Release of N-terminal transit peptides from precursor proteins imported into the mitochondrion, typically with Arg in position P2.. Its activity is regulated as follows. Binding to MAS2 is required for catalytic activity. Inhibited by high levels (&gt; 1uM) of zinc. Inhibited by metal chelators ethylenediaminetetraacetic acid (EDTA) and O-phenanthroline. Functionally, catalytic subunit of the essential mitochondrial processing protease (MPP), which cleaves the mitochondrial sequence off newly imported precursors proteins. Preferentially, cleaves after an arginine at position P2. This Saccharomyces cerevisiae (strain ATCC 204508 / S288c) (Baker's yeast) protein is Mitochondrial-processing peptidase subunit beta.